A 251-amino-acid chain; its full sequence is Triosephosphate isomerase (251 aa).

Substrate is bound at residue Asn9–Lys11. The active-site Electrophile is His94. Glu167 serves as the catalytic Proton acceptor. Substrate contacts are provided by residues Gly173, Ser213, and Gly234–Gly235.

This sequence belongs to the triosephosphate isomerase family. In terms of assembly, homodimer.

The protein resides in the cytoplasm. It carries out the reaction D-glyceraldehyde 3-phosphate = dihydroxyacetone phosphate. It functions in the pathway carbohydrate biosynthesis; gluconeogenesis. It participates in carbohydrate degradation; glycolysis; D-glyceraldehyde 3-phosphate from glycerone phosphate: step 1/1. Functionally, involved in the gluconeogenesis. Catalyzes stereospecifically the conversion of dihydroxyacetone phosphate (DHAP) to D-glyceraldehyde-3-phosphate (G3P). The sequence is that of Triosephosphate isomerase from Finegoldia magna (strain ATCC 29328 / DSM 20472 / WAL 2508) (Peptostreptococcus magnus).